A 397-amino-acid chain; its full sequence is Ribosomal RNA large subunit methyltransferase I (397 aa).

Residues Ser2–Lys80 enclose the PUA domain.

It belongs to the methyltransferase superfamily. RlmI family.

Its subcellular location is the cytoplasm. The enzyme catalyses cytidine(1962) in 23S rRNA + S-adenosyl-L-methionine = 5-methylcytidine(1962) in 23S rRNA + S-adenosyl-L-homocysteine + H(+). Specifically methylates the cytosine at position 1962 (m5C1962) of 23S rRNA. This is Ribosomal RNA large subunit methyltransferase I from Vibrio vulnificus (strain CMCP6).